Reading from the N-terminus, the 370-residue chain is DNA replication and repair protein RecF (370 aa).

30-37 (GENAQGKT) is an ATP binding site.

This sequence belongs to the RecF family.

It is found in the cytoplasm. In terms of biological role, the RecF protein is involved in DNA metabolism; it is required for DNA replication and normal SOS inducibility. RecF binds preferentially to single-stranded, linear DNA. It also seems to bind ATP. The protein is DNA replication and repair protein RecF of Listeria welshimeri serovar 6b (strain ATCC 35897 / DSM 20650 / CCUG 15529 / CIP 8149 / NCTC 11857 / SLCC 5334 / V8).